A 98-amino-acid chain; its full sequence is DNA-binding protein Fis (98 aa).

Positions 74–93 (QTRAALMMGINRGTLRKKLK) form a DNA-binding region, H-T-H motif.

Belongs to the transcriptional regulatory Fis family. Homodimer.

In terms of biological role, activates ribosomal RNA transcription. Plays a direct role in upstream activation of rRNA promoters. In Photorhabdus laumondii subsp. laumondii (strain DSM 15139 / CIP 105565 / TT01) (Photorhabdus luminescens subsp. laumondii), this protein is DNA-binding protein Fis.